Reading from the N-terminus, the 307-residue chain is Ribonuclease Z (307 aa).

H61, H63, D65, H66, H138, D208, and H264 together coordinate Zn(2+). D65 acts as the Proton acceptor in catalysis.

It belongs to the RNase Z family. Homodimer. It depends on Zn(2+) as a cofactor.

The catalysed reaction is Endonucleolytic cleavage of RNA, removing extra 3' nucleotides from tRNA precursor, generating 3' termini of tRNAs. A 3'-hydroxy group is left at the tRNA terminus and a 5'-phosphoryl group is left at the trailer molecule.. Zinc phosphodiesterase, which displays some tRNA 3'-processing endonuclease activity. Probably involved in tRNA maturation, by removing a 3'-trailer from precursor tRNA. The polypeptide is Ribonuclease Z (Pyrococcus horikoshii (strain ATCC 700860 / DSM 12428 / JCM 9974 / NBRC 100139 / OT-3)).